A 452-amino-acid polypeptide reads, in one-letter code: Scaffold protein ILK (452 aa).

Met-1 bears the N-acetylmethionine mark. 5 ANK repeats span residues 2–30, 31–63, 64–96, 97–129, and 130–174; these read DDIF…LNQG, DDHG…INVM, NRGD…INAV, NEHG…VSIC, and NKYG…GTTR. An interaction with LIMS1 region spans residues 33 to 139; the sequence is HGFSPLHWAC…NKYGEMPVDK (107 aa). A Phosphothreonine; by PAK1 modification is found at Thr-173. The tract at residues 180-212 is PH-like; mediates interaction with TGFB1I1; that stretch reads GTLNKHSGIDFKQLNFLTKLNENHSGELWKGRW. Ser-186 carries the post-translational modification Phosphoserine. In terms of domain architecture, Protein kinase spans 193–446; sequence LNFLTKLNEN…PKFDMIVPIL (254 aa). Positions 200, 202, 203, 204, and 220 each coordinate ATP. Residue Ser-246 is modified to Phosphoserine; by PAK1. ATP-binding residues include His-270, Met-272, and Asn-279. Residue Asp-339 participates in Mg(2+) binding. Lys-341 serves as a coordination point for ATP. The short motif at 363–371 is the Nuclear localization signal element; the sequence is KKPEDTNRR. The residue at position 426 (Lys-426) is an N6-acetyllysine.

The protein belongs to the protein kinase superfamily. TKL Ser/Thr protein kinase family. In terms of assembly, component of the heterotrimeric IPP (ILK-PINCH-PARVIN) complex composed of ILK, LIMS1/PINCH and PARVA; the complex binds to F-actin via the C-terminal tail of LIMS1 and the N-terminal region of PARVA, promoting F-actin filament bundling. Formation of the IPP complex is dependent on protein kinase C and precedes integrin-mediated cell adhesion and spreading. ILK also interacts with LIMS2/PINCH2 and with PARVB and PARVG which may substitute for LIMS1 and PARVA in the IPP complex; PARVA and PARVB compete for the same binding site. Interaction with PARVG promotes the establishment of cell polarity required for leukocyte migration. Interacts with the cytoplasmic domain of integrin ITGB1 and may also interact with integrins ITGB2, ITGB3 and/or ITGB5. Interacts probably also with TGFB1I1. Interacts (via ANK repeats) with EPHA1 (via SAM domain); stimulated by EFNA1 but independent of the kinase activity of EPHA1. Interacts with FERMT2. Interacts with LIMD2; leading to activate the protein kinase activity. Interacts with PXN/PAXILLIN (via LD motif 4). Interacts with CCDC25 (via cytoplasmic region); initiating the ILK-PARVB cascade to induce cytoskeleton rearrangement and directional migration of cells. Interacts with IQGAP1; the interaction is required for localization of IQGAP1 to the cell cortex. Post-translationally, phosphorylation by PAK1 modulates ILK subcellular location by promoting its nuclear export. As to expression, highly expressed in heart followed by skeletal muscle, pancreas and kidney. Weakly expressed in placenta, lung and liver.

It is found in the cell junction. Its subcellular location is the focal adhesion. The protein localises to the cell membrane. The protein resides in the cell projection. It localises to the lamellipodium. It is found in the cytoplasm. Its subcellular location is the myofibril. The protein localises to the sarcomere. The protein resides in the nucleus. It localises to the cytoskeleton. It is found in the microtubule organizing center. Its subcellular location is the centrosome. The protein localises to the cell cortex. Scaffold protein which mediates protein-protein interactions during a range of cellular events including focal adhesion assembly, cell adhesion and cell migration. Regulates integrin-mediated signal transduction by contributing to inside-out integrin activation. Recruits PARVA and LIMS1/PITCH to form the heterotrimeric IPP (ILK-PINCH-PARVIN) complex which binds to F-actin via the C-terminal tail of LIMS1 and the N-terminal region of PARVA, promoting F-actin filament bundling, a process required to generate force for actin cytoskeleton reorganization and subsequent dynamic cell adhesion events such as cell spreading and migration. Binding to PARVA promotes effective assembly of ILK into focal adhesions while PARVA-bound ILK can simultaneously engage integrin-beta cytoplasmic tails to mediate cell adhesion. Plays a role with PARVG in promoting the cell adhesion and spreading of leukocytes. Acts as an upstream effector of both AKT1/PKB and GSK3. Mediates trafficking of caveolae to the cell surface in an ITGB1-dependent manner by promoting the recruitment of IQGAP1 to the cell cortex which cooperates with its effector DIAPH1 to locally stabilize microtubules and allow stable insertion of caveolae into the plasma membrane. Required for the maintenance of mitotic spindle integrity by promoting phosphorylation of TACC3 by AURKA. Associates with chromatin and may act as a negative regulator of transcription when located in the nucleus. This chain is Scaffold protein ILK, found in Homo sapiens (Human).